The chain runs to 248 residues: UPF0736 protein BC_1176 (248 aa).

This sequence belongs to the UPF0736 family.

This chain is UPF0736 protein BC_1176, found in Bacillus cereus (strain ATCC 14579 / DSM 31 / CCUG 7414 / JCM 2152 / NBRC 15305 / NCIMB 9373 / NCTC 2599 / NRRL B-3711).